Reading from the N-terminus, the 196-residue chain is uncharacterized protein (196 aa).

The interval 1–21 (MQPEVEPLISPNLGAPGSHRE) is disordered.

This is an uncharacterized protein from Mus musculus (Mouse).